Reading from the N-terminus, the 153-residue chain is General odorant-binding protein lush (153 aa).

The N-terminal stretch at 1 to 29 is a signal peptide; sequence MKHWKRRSSAVFAIVLQVLVLLLPDPAVA. 3 cysteine pairs are disulfide-bonded: Cys46–Cys79, Cys75–Cys132, and Cys121–Cys141. Positions 81 and 86 each coordinate 1-propanol. Butan-1-ol contacts are provided by Ser81 and Thr86. Ethanol-binding residues include Ser81 and Thr86.

Belongs to the PBP/GOBP family. As to expression, specifically expressed in chemosensory system in both males and females. Expressed in a subset of trichoid chemosensory sensilla located on the ventral-lateral surface of the third antennal segment. Secreted from non-neuronal support cells into the sensillum lymph that bathes the olfactory neurons within these sensilla.

The protein resides in the secreted. In terms of biological role, odorant-binding protein required for olfactory behavior and for activity of pheromone-sensitive neurons. Binds to alcohols and mediates avoidance behavior to high concentrations of alcohols, the alcohol-binding possibly resulting in activation of receptors on T2B neurons, the activation of these receptors inhibiting these neurons. Acts in concert with Snmp and lush to capture cVA molecules on the surface of Or67d expressing olfactory dendrites and facilitate their transfer to the odorant-receptor Orco complex. Required for cVA response, probably by binding to VA. May act by serving as an adapter that bridges the presence of gaseous pheromone molecules, cVA, to activation of specific neuronal receptors expressed on T1 olfactory neurons, possibly via a specific conformational change induced by cVA that in turn activates T1 receptors. T1 neurons are excited by the pheromone VA, while T2 neurons are inhibited by alcohols. Also binds to phthalates. This is General odorant-binding protein lush (lush) from Drosophila melanogaster (Fruit fly).